The following is a 252-amino-acid chain: Aspartate/glutamate leucyltransferase (252 aa).

It belongs to the R-transferase family. Bpt subfamily.

It is found in the cytoplasm. It catalyses the reaction N-terminal L-glutamyl-[protein] + L-leucyl-tRNA(Leu) = N-terminal L-leucyl-L-glutamyl-[protein] + tRNA(Leu) + H(+). The enzyme catalyses N-terminal L-aspartyl-[protein] + L-leucyl-tRNA(Leu) = N-terminal L-leucyl-L-aspartyl-[protein] + tRNA(Leu) + H(+). Functionally, functions in the N-end rule pathway of protein degradation where it conjugates Leu from its aminoacyl-tRNA to the N-termini of proteins containing an N-terminal aspartate or glutamate. This chain is Aspartate/glutamate leucyltransferase, found in Hyphomonas neptunium (strain ATCC 15444).